A 180-amino-acid chain; its full sequence is Crossover junction endodeoxyribonuclease RuvC (180 aa).

Active-site residues include Asp-7, Glu-66, and Asp-138. Residues Asp-7, Glu-66, and Asp-138 each contribute to the Mg(2+) site.

It belongs to the RuvC family. In terms of assembly, homodimer which binds Holliday junction (HJ) DNA. The HJ becomes 2-fold symmetrical on binding to RuvC with unstacked arms; it has a different conformation from HJ DNA in complex with RuvA. In the full resolvosome a probable DNA-RuvA(4)-RuvB(12)-RuvC(2) complex forms which resolves the HJ. Mg(2+) serves as cofactor.

It is found in the cytoplasm. The enzyme catalyses Endonucleolytic cleavage at a junction such as a reciprocal single-stranded crossover between two homologous DNA duplexes (Holliday junction).. Its function is as follows. The RuvA-RuvB-RuvC complex processes Holliday junction (HJ) DNA during genetic recombination and DNA repair. Endonuclease that resolves HJ intermediates. Cleaves cruciform DNA by making single-stranded nicks across the HJ at symmetrical positions within the homologous arms, yielding a 5'-phosphate and a 3'-hydroxyl group; requires a central core of homology in the junction. The consensus cleavage sequence is 5'-(A/T)TT(C/G)-3'. Cleavage occurs on the 3'-side of the TT dinucleotide at the point of strand exchange. HJ branch migration catalyzed by RuvA-RuvB allows RuvC to scan DNA until it finds its consensus sequence, where it cleaves and resolves the cruciform DNA. The polypeptide is Crossover junction endodeoxyribonuclease RuvC (Janthinobacterium sp. (strain Marseille) (Minibacterium massiliensis)).